The following is a 1487-amino-acid chain: Probable lysine-specific demethylase SE14 (1487 aa).

A disordered region spans residues 1–23 (MPPQPPPAASASASAPDPAVPAW). A compositionally biased stretch (low complexity) spans 9 to 22 (ASASASAPDPAVPA). A JmjN domain is found at 30 to 71 (APEYRPTESEFADPIAFLSRVEREAAAYGICKVIPPHPRPSR). The span at 86–104 (CDAPAPSPAAASDSSIPPS) shows a compositional bias: low complexity. A disordered region spans residues 86–113 (CDAPAPSPAAASDSSIPPSSSSPPPVSA). One can recognise a JmjC domain in the interval 232–398 (NSPWNLQAIA…FAKEAAVRRA (167 aa)). 3 residues coordinate Fe cation: His-275, Glu-277, and His-366. 2 disordered regions span residues 494-555 (SCSK…DDGD) and 684-718 (YGDT…PDVE). Composition is skewed to basic and acidic residues over residues 498–507 (APEKKGEDGP) and 542–551 (QAPEGEKLDT). The C2H2-type 1; degenerate zinc-finger motif lies at 1377–1400 (FQCDIEFCDMTFETKAELRAHQRN). C2H2-type zinc fingers lie at residues 1400 to 1424 (NICT…QCVH), 1430 to 1454 (FKCP…IRVH), and 1460 to 1486 (YKCS…KFNH).

The cofactor is Fe(2+).

Its subcellular location is the nucleus. Functionally, histone demethylase that demethylates 'Lys-4' (H3K4me) of histone H3. Involved in the control of flowering time. Has a suppressive effect on floral transition under long day conditions through the demethylation of H3K4me3 in the promoter region of the flower-promoting signal HD3B/RFT1. In Oryza sativa subsp. japonica (Rice), this protein is Probable lysine-specific demethylase SE14 (SE14).